Reading from the N-terminus, the 159-residue chain is MNISIVAIGKLKEKYLKQGIDEYIKRLSAYAKVDIIELPDEKAPENLSDQDMKIVKDKEGERILSKISPDAHVIALAIEGKMKSSEELADNMDRLATYGKSKATFVIGGSLGLSDAVLKRADEKLSFSRMTFPHQLMRLILLEQVYRAFRINRGEPYHK.

Residues leucine 76, glycine 108, and 127-132 (FSRMTF) each bind S-adenosyl-L-methionine.

This sequence belongs to the RNA methyltransferase RlmH family. In terms of assembly, homodimer.

It is found in the cytoplasm. The catalysed reaction is pseudouridine(1915) in 23S rRNA + S-adenosyl-L-methionine = N(3)-methylpseudouridine(1915) in 23S rRNA + S-adenosyl-L-homocysteine + H(+). Its function is as follows. Specifically methylates the pseudouridine at position 1915 (m3Psi1915) in 23S rRNA. This is Ribosomal RNA large subunit methyltransferase H from Bacillus licheniformis (strain ATCC 14580 / DSM 13 / JCM 2505 / CCUG 7422 / NBRC 12200 / NCIMB 9375 / NCTC 10341 / NRRL NRS-1264 / Gibson 46).